We begin with the raw amino-acid sequence, 654 residues long: MEDIKKCGYLRKQKSMRKRYFVLRCPGTRGPARLEYYENEKKFRVAEGSGGPRGVLNLEEAFGVNKRSDAKKRHLLVIYTRDGGLGVSADGEEEQDEWYQAILEVQAQARALSSSPDAPAWPGPAFREVWQVSVRPRGLGQTRNLSGIYRLCLAERTLGLLRLRSENPSVTLQLMNVRRCGHSDNYFFVEVGRSAVTGPGELWMQVEDSVVAQNMHETILEAMKSLSEEFRPRTKSQSLSSTPISVPSRRHHPNPPPPSQVGISRRSRAETPIENSPVPKPHSLSKDYSVQSPEEEEEEKGARVETNESSADYGSASSDEYGSSPGVLEAPVFLPPSPGPRETNYISMALYGRRSLVMEPISTNANVPAEEGSRLTLFQEEDNYAMMGQREPRQETGYMPMLPGSNRSQDYMPMTPTSISPPAPVEMAGYVMMSPLGSCSPEIERLSWPPSQEVSAGSSDSHASDYMNMWSLSRSASSTPPPQEAFLSSPGGPCRVPASYRSLPRSYKMEPQPSARASCSSSSDSLEEVNAGKNRRPLSISIDSWNTGTLSGNYRRPPSPGEYVSIHFRAPPEEDLREGSHRCPKRVRFHGGAALGDAQRGLHGNGLCASQNFTTSCKNERGTGNERGKCLQTCGEITAGLGEDFLGEGLLGCR.

Residues 3-107 form the PH domain; it reads DIKKCGYLRK…WYQAILEVQA (105 aa). Phosphotyrosine is present on Y36. Residues 126–230 form the IRS-type PTB domain; sequence FREVWQVSVR…EAMKSLSEEF (105 aa). The disordered stretch occupies residues 228 to 329; that stretch reads EEFRPRTKSQ…EYGSSPGVLE (102 aa). The span at 235–245 shows a compositional bias: polar residues; it reads KSQSLSSTPIS. The residue at position 276 (S276) is a Phosphoserine. The span at 307–321 shows a compositional bias: polar residues; sequence NESSADYGSASSDEY. Y345 carries the post-translational modification Phosphotyrosine; by INSR. Short sequence motifs (YXXM motif) lie at residues 345 to 348, 384 to 387, 398 to 401, 411 to 414, 430 to 433, and 466 to 469; these read YISM, YAMM, YMPM, YVMM, and YMNM. 2 positions are modified to phosphotyrosine; by INSR: Y398 and Y411. Y430 carries the post-translational modification Phosphotyrosine. Disordered stretches follow at residues 473 to 494 and 507 to 532; these read SRSASSTPPPQEAFLSSPGGPC and YKMEPQPSARASCSSSSDSLEEVNAG. Residues 514-524 show a composition bias toward low complexity; that stretch reads SARASCSSSSD. Residue Y563 is modified to Phosphotyrosine; by INSR.

In terms of assembly, interacts with the NPXY motif of tyrosine-phosphorylated igf1r and insr via the PTB domain. Binds to phosphatidylinositol 3-kinase p85 subunit via the phosphorylated YXXM motifs.

Its function is as follows. May mediate the control of various cellular processes by insulin. When phosphorylated by the insulin receptor binds specifically to various cellular proteins containing SH2 domains such as phosphatidylinositol 3-kinase p85 subunit or grb2. Activates phosphatidylinositol 3-kinase when bound to the regulatory p85 subunit. This is Insulin receptor substrate 1 from Xenopus tropicalis (Western clawed frog).